A 306-amino-acid chain; its full sequence is Pantothenate kinase (306 aa).

91–98 provides a ligand contact to ATP; the sequence is GSVAVGKS.

Belongs to the prokaryotic pantothenate kinase family.

The protein resides in the cytoplasm. It carries out the reaction (R)-pantothenate + ATP = (R)-4'-phosphopantothenate + ADP + H(+). It participates in cofactor biosynthesis; coenzyme A biosynthesis; CoA from (R)-pantothenate: step 1/5. This Streptococcus pneumoniae (strain Hungary19A-6) protein is Pantothenate kinase.